We begin with the raw amino-acid sequence, 204 residues long: Rho GDP-dissociation inhibitor 1 (204 aa).

Positions 1 to 36 are disordered; that stretch reads MAEQEPTAEQLAQIAAENEEDEHSVNYKPPAQKSIQ. Ala2 carries the post-translational modification N-acetylalanine. The residue at position 34 (Ser34) is a Phosphoserine. Lys43 is modified (N6-acetyllysine). Ser47 carries the post-translational modification Phosphoserine. The segment at 66-83 is hydrophobic; it reads NVPNVVVTRLTLVCSTAP. Position 101 is a phosphoserine; by PKA (Ser101). Lys105 carries the post-translational modification N6-acetyllysine. Ser115 is modified (phosphoserine; by PKC). Residue Lys127 is modified to N6-acetyllysine. Residues Lys138 and Lys141 each participate in a glycyl lysine isopeptide (Lys-Gly) (interchain with G-Cter in SUMO1); alternate cross-link. Residues Lys138 and Lys141 each participate in a glycyl lysine isopeptide (Lys-Gly) (interchain with G-Cter in SUMO2); alternate cross-link. Position 141 is an N6-acetyllysine; alternate (Lys141). At Lys141 the chain carries N6-succinyllysine; alternate. Position 178 is an N6-acetyllysine (Lys178).

The protein belongs to the Rho GDI family. In terms of assembly, monomer. Interacts with FER. Interacts with PLXNB3. Forms a heterodimer with RAC1. Interacts with RHOA, the affinity is increased by three orders of magnitude when RHOA is prenylated. Interacts with PSMD10; the interaction increases ARHGDIA association with RHOA, leading to ARHGDIA-mediated inactivation of RHOA and ROCK and prolonged AKT activation. Interacts with KANK2; the interaction is direct and may regulate the interaction of ARHGDIA with RHOA, RAC1 and CDC42. Interacts with RHOC. Interacts with CDC42. Interacts with NGFR (via death domain); NGFR binding decreases the affinity for RHOA. In terms of tissue distribution, brain, lung, thymus, spleen, small intestine, and kidney, and weakly in heart and liver.

It is found in the cytoplasm. Controls Rho proteins homeostasis. Regulates the GDP/GTP exchange reaction of the Rho proteins by inhibiting the dissociation of GDP from them, and the subsequent binding of GTP to them. Retains Rho proteins such as CDC42, RAC1 and RHOA in an inactive cytosolic pool, regulating their stability and protecting them from degradation. Actively involved in the recycling and distribution of activated Rho GTPases in the cell, mediates extraction from membranes of both inactive and activated molecules due its exceptionally high affinity for prenylated forms. Through the modulation of Rho proteins, may play a role in cell motility regulation. In glioma cells, inhibits cell migration and invasion by mediating the signals of SEMA5A and PLXNB3 that lead to inactivation of RAC1. This is Rho GDP-dissociation inhibitor 1 (ARHGDIA) from Bos taurus (Bovine).